An 82-amino-acid polypeptide reads, in one-letter code: Acyl carrier protein (82 aa).

A Carrier domain is found at 4–79 (EKIFQELKNI…DVVDIIESNL (76 aa)). An O-(pantetheine 4'-phosphoryl)serine modification is found at serine 39.

This sequence belongs to the acyl carrier protein (ACP) family. In terms of processing, 4'-phosphopantetheine is transferred from CoA to a specific serine of apo-ACP by AcpS. This modification is essential for activity because fatty acids are bound in thioester linkage to the sulfhydryl of the prosthetic group.

Its subcellular location is the cytoplasm. Its pathway is lipid metabolism; fatty acid biosynthesis. Its function is as follows. Carrier of the growing fatty acid chain in fatty acid biosynthesis. This chain is Acyl carrier protein, found in Coprothermobacter proteolyticus (strain ATCC 35245 / DSM 5265 / OCM 4 / BT).